The chain runs to 332 residues: Iron-utilization periplasmic protein (332 aa).

An N-terminal signal peptide occupies residues 1-23 (MQFKHFKLATLAAALAFSANSFA). Fe cation contacts are provided by His32, Glu80, Tyr218, and Tyr219.

Belongs to the bacterial solute-binding protein 1 family. The complex is composed of two ATP-binding proteins (FbpC), two transmembrane proteins (FbpB) and a solute-binding protein (FbpA).

The protein localises to the periplasm. In terms of biological role, part of the ABC transporter complex FbpABC (TC 3.A.1.10.1) involved in Fe(3+) ions import. This protein specifically binds Fe(3+) and is involved in its transmembrane transport. The protein is Iron-utilization periplasmic protein (fbpA) of Haemophilus influenzae (strain ATCC 51907 / DSM 11121 / KW20 / Rd).